Reading from the N-terminus, the 547-residue chain is Sensor histidine kinase CitA (547 aa).

Residues 1–23 are Cytoplasmic-facing; sequence MSIYPMYTRKITHWFARRSFQNR. A helical membrane pass occupies residues 24-44; that stretch reads IFLLILFTSTIVMLAMSWYLT. Topologically, residues 45–180 are periplasmic; that stretch reads DITEERLHYQ…TIEQLENWLS (136 aa). Citrate is bound by residues R109, H112, R150, and K152. A helical transmembrane segment spans residues 181–201; that stretch reads LQISSLLIPMAIMLLLLLFCA. The Cytoplasmic portion of the chain corresponds to 202-547; sequence RRFSLHIKKQ…IPLTRDEHHG (346 aa). The region spanning 225 to 264 is the PAS domain; that stretch reads IQQSVLFESVFEGLIAIDSDYKITAINQTARRLLNLSQPE. The Histidine kinase domain maps to 347 to 542; the sequence is AVQHEHRNLI…IFTLYIPLTR (196 aa). Position 350 is a phosphohistidine; by autocatalysis (H350).

Homodimer. In vitro CitB and the CitA kinase domain form a complex, formation of which is enhanced by ATP. Autophosphorylated.

The protein localises to the cell inner membrane. The enzyme catalyses ATP + protein L-histidine = ADP + protein N-phospho-L-histidine.. Its function is as follows. Member of the two-component regulatory system CitA/CitB. Probably activates CitB by phosphorylation. The periplasmic domain binds H-citrate(2-), which is essential for induction of the citrate-fermentation genes. The polypeptide is Sensor histidine kinase CitA (citA) (Klebsiella pneumoniae).